Consider the following 113-residue polypeptide: Hydrogenase maturation factor HypA (113 aa).

H2 contributes to the Ni(2+) binding site. Residues C73, C76, C89, and C92 each contribute to the Zn(2+) site.

The protein belongs to the HypA/HybF family.

Functionally, involved in the maturation of [NiFe] hydrogenases. Required for nickel insertion into the metal center of the hydrogenase. The chain is Hydrogenase maturation factor HypA from Rhizobium leguminosarum bv. viciae.